The sequence spans 451 residues: uncharacterized protein (451 aa).

Residues 2–60 enclose the TRAM domain; it reads NVVLKQRIPLKIKRMGINGEGIGFYKKTLIFVPGALKGEEVFCQISSVRRNFAEAKLLK. [4Fe-4S] cluster-binding residues include C73, C79, C82, and C162. Positions 283, 312, 333, and 381 each coordinate S-adenosyl-L-methionine. C408 acts as the Nucleophile in catalysis.

It belongs to the class I-like SAM-binding methyltransferase superfamily. RNA M5U methyltransferase family.

This is an uncharacterized protein from Streptococcus agalactiae serotype III (strain NEM316).